The sequence spans 327 residues: GMP reductase (327 aa).

Cys176 (thioimidate intermediate) is an active-site residue. Ile205–Val228 contacts NADP(+).

Belongs to the IMPDH/GMPR family. GuaC type 2 subfamily.

It carries out the reaction IMP + NH4(+) + NADP(+) = GMP + NADPH + 2 H(+). In terms of biological role, catalyzes the irreversible NADPH-dependent deamination of GMP to IMP. It functions in the conversion of nucleobase, nucleoside and nucleotide derivatives of G to A nucleotides, and in maintaining the intracellular balance of A and G nucleotides. The polypeptide is GMP reductase (Streptococcus pyogenes serotype M49 (strain NZ131)).